A 302-amino-acid polypeptide reads, in one-letter code: Methionyl-tRNA formyltransferase (302 aa).

107 to 110 contributes to the (6S)-5,6,7,8-tetrahydrofolate binding site; that stretch reads SLLP.

This sequence belongs to the Fmt family.

The catalysed reaction is L-methionyl-tRNA(fMet) + (6R)-10-formyltetrahydrofolate = N-formyl-L-methionyl-tRNA(fMet) + (6S)-5,6,7,8-tetrahydrofolate + H(+). Functionally, attaches a formyl group to the free amino group of methionyl-tRNA(fMet). The formyl group appears to play a dual role in the initiator identity of N-formylmethionyl-tRNA by promoting its recognition by IF2 and preventing the misappropriation of this tRNA by the elongation apparatus. The chain is Methionyl-tRNA formyltransferase from Leifsonia xyli subsp. xyli (strain CTCB07).